Here is a 714-residue protein sequence, read N- to C-terminus: Phenylalanine 2-monooxygenase precursor (714 aa).

A propeptide spans 1-15 (MGVTVIPRLLGLKDE) (removed in mature form; occupies the channel of the substrate amino acid from the outside of the protein to the interior flavin ring in the precursor). Residues G2, G68, and 95-96 (EA) each bind FAD. Positions 108–109 (IK) are cleaved as a propeptide — linker peptide. Residues R120, 141 to 144 (GAMR), and V375 contribute to the FAD site. R144 is a binding site for substrate. Y537 contributes to the substrate binding site. FAD-binding positions include 652 to 653 (SD) and 660 to 662 (GWL). Residue G660 coordinates substrate.

It belongs to the phenylalanine 2-monooxygenase family. As to quaternary structure, heterotetramer composed of 2 alpha and 2 beta subunits. FAD serves as cofactor. Proteolytically cleaved to yield the active enzyme. Cleavage of the linkage between the 2 subunits causes reshaping of the oxygen channel and the hydrophobic environment around the flavin ring. Removal of the prosequence causes opening of the amino acid channel.

The enzyme catalyses L-phenylalanine + O2 = 2-phenylacetamide + CO2 + H2O. Catalyzes both oxygenative decarboxylation and oxidative deamination, depending on the substrate used. Has high activity for L-Phe and L-Tyr, but relatively low activities for L-Met and L-Trp. L-Phe is mainly oxygenated and L-Met is mainly oxidized. This is Phenylalanine 2-monooxygenase precursor from Pseudomonas sp.